Here is a 312-residue protein sequence, read N- to C-terminus: Zinc-finger homeodomain protein 4 (312 aa).

The disordered stretch occupies residues 20–74 (GGGGSHGHMIHHHDHHAANSAPPTHNNNNTTQPPPMPLHGNGHGNNYDHHHHQDP). The span at 37–50 (ANSAPPTHNNNNTT) shows a compositional bias: low complexity. A ZF-HD dimerization-type; degenerate zinc finger spans residues 90–139 (YKECLKNHAAAMGGNATDGCGEFMPSGEDGSIEALTCSACNCHRNFHRKE). Positions 218–281 (KKRFRTKFTP…NNKIHFSKKN (64 aa)) form a DNA-binding region, homeobox.

Homo- and heterodimer with other ZFHD proteins. Interacts with ZHD1, ZHD2, ZHD5, ZHD7, ZHD8, ZHD10 and ZHD11. Mostly expressed in flowers and inflorescence.

Its subcellular location is the nucleus. Functionally, putative transcription factor. Probably involved in the regulation of floral induction. In Arabidopsis thaliana (Mouse-ear cress), this protein is Zinc-finger homeodomain protein 4 (ZHD4).